A 439-amino-acid chain; its full sequence is Histidinol dehydrogenase (439 aa).

NAD(+) is bound by residues Tyr129, Gln193, and Asn222. Thr245, Gln267, and His270 together coordinate substrate. Gln267 and His270 together coordinate Zn(2+). Catalysis depends on proton acceptor residues Glu336 and His337. Substrate contacts are provided by His337, Asp370, Glu424, and His429. Residue Asp370 participates in Zn(2+) binding. Zn(2+) is bound at residue His429.

The protein belongs to the histidinol dehydrogenase family. It depends on Zn(2+) as a cofactor.

It carries out the reaction L-histidinol + 2 NAD(+) + H2O = L-histidine + 2 NADH + 3 H(+). The protein operates within amino-acid biosynthesis; L-histidine biosynthesis; L-histidine from 5-phospho-alpha-D-ribose 1-diphosphate: step 9/9. Its function is as follows. Catalyzes the sequential NAD-dependent oxidations of L-histidinol to L-histidinaldehyde and then to L-histidine. The sequence is that of Histidinol dehydrogenase from Cutibacterium acnes (strain DSM 16379 / KPA171202) (Propionibacterium acnes).